Here is a 551-residue protein sequence, read N- to C-terminus: RCC1 and BTB domain-containing protein 2 (551 aa).

RCC1 repeat units follow at residues 64–115 (NDEI…VLAT), 117–169 (EGEV…VLTS), 171–222 (GEVF…AVVD), 223–274 (TGEV…VLTD), 276–326 (GQVY…AAKT), and 328–382 (GGHV…TVAE). Positions 394–457 (ADLKFLVDGK…LYTDSISLSP (64 aa)) constitute a BTB domain.

The protein resides in the cytoplasmic vesicle. It is found in the secretory vesicle. The protein localises to the acrosome. The polypeptide is RCC1 and BTB domain-containing protein 2 (RCBTB2) (Homo sapiens (Human)).